The following is a 1499-amino-acid chain: ABC multidrug transporter A-2 (1499 aa).

Disordered regions lie at residues 1 to 66 (MAMQ…IDQE) and 80 to 107 (QISQ…NSDK). The span at 16–30 (ISSSAGQEVASTIRR) shows a compositional bias: polar residues. Residues 31–51 (QFTDADADRIVETPLGEKADS) show a composition bias toward basic and acidic residues. The segment covering 80 to 94 (QISQKSAGPTNTFLD) has biased composition (polar residues). In terms of domain architecture, ABC transporter 1 spans 166–415 (LRSILGCRNR…FIDMGFDCPD (250 aa)). The N-linked (GlcNAc...) asparagine glycan is linked to N339. 5 consecutive transmembrane segments (helical) span residues 526–546 (MTLA…SVFY), 561–581 (LLFF…LTLW), 606–626 (MIVD…ILYF), 635–655 (GHFF…SNIF), and 669–689 (MVPS…TIPV). An N-linked (GlcNAc...) asparagine glycan is attached at N763. Residues 778 to 798 (GIILGFFFFFLAAYIICSELV) traverse the membrane as a helical segment. In terms of domain architecture, ABC transporter 2 spans 857 to 1100 (FHWQDVCYDI…LIKYFENKGS (244 aa)). Residue 893 to 900 (GVTGAGKT) participates in ATP binding. 5 helical membrane-spanning segments follow: residues 1193 to 1213 (YIYS…FTFW), 1227 to 1247 (FAIF…MPYF), 1268 to 1288 (AFML…AVPA), 1317 to 1337 (LLIL…IAGI), and 1353 to 1373 (LCLI…FWIF). An N-linked (GlcNAc...) asparagine glycan is attached at N1414. The chain crosses the membrane as a helical span at residues 1466–1486 (GLLFVYIVFNIFAAIFLYWLI).

This sequence belongs to the ABC transporter superfamily. ABCG family. PDR (TC 3.A.1.205) subfamily.

The protein resides in the cell membrane. The enzyme catalyses itraconazole(in) + ATP + H2O = itraconazole(out) + ADP + phosphate + H(+). The catalysed reaction is voriconazole(in) + ATP + H2O = voriconazole(out) + ADP + phosphate + H(+). With respect to regulation, the efflux inhibitor FK506 impairs the transport activity. In terms of biological role, pleiotropic ABC efflux transporter that confers resistance to structurally and functionally unrelated compounds including azoles such as itraconazole, posaconazole, and voriconazole. In Aspergillus fumigatus (strain ATCC MYA-4609 / CBS 101355 / FGSC A1100 / Af293) (Neosartorya fumigata), this protein is ABC multidrug transporter A-2.